A 451-amino-acid polypeptide reads, in one-letter code: MVAVAILAAGRGTRMKSNLPKVLHPLGGRSLVERVLESCQLINPEKRLIIIGYQAEAVKQTLEPYEGIEFVEQKEQLGTGHAIIQLIPYLQNFQGDLLVLNGDVPLLRSESLHHLIEIHKTNQNSATILTAHLPHPKGYGRVFCDGNNLVTQIVEERDCTDAQRQNKRVNGGIYCFNWPQLAEVLPKLKPDNDQQEYYLTDVVKYLNSVMAVDVEDYLEISGINDRKQLATAYDILQNRIKDYWMRAGVTLIDPDSITIDDTVELQPDVIIEPQTHLRGQTVIGSGCRIGPGSLIENSKIGENVTVLYAVITDSEVESGCRIGPYAHLRGEAKIKASCRIGNFVEIKKSTVGEKSNVAHLSYLGDATLGDKVNVGAGTITANYDGVKKHPTVIGNNTKTGANSVLVAPVTIGNDVTIAAGSVINKDVPDDSLAIARERQKNISGWRMKTDD.

The tract at residues 1–226 (MVAVAILAAG…YLEISGINDR (226 aa)) is pyrophosphorylase. Residues 7–10 (LAAG), Lys21, Gln73, and 78–79 (GT) contribute to the UDP-N-acetyl-alpha-D-glucosamine site. Position 103 (Asp103) interacts with Mg(2+). UDP-N-acetyl-alpha-D-glucosamine-binding residues include Gly140, Glu155, Asn170, and Asn224. A Mg(2+)-binding site is contributed by Asn224. Residues 227-247 (KQLATAYDILQNRIKDYWMRA) are linker. The segment at 248–451 (GVTLIDPDSI…ISGWRMKTDD (204 aa)) is N-acetyltransferase. 2 residues coordinate UDP-N-acetyl-alpha-D-glucosamine: Arg329 and Lys347. The active-site Proton acceptor is His359. Residues Tyr362 and Asn373 each coordinate UDP-N-acetyl-alpha-D-glucosamine. Residues Ala376, 382 to 383 (NY), Ala419, and Arg436 contribute to the acetyl-CoA site.

It in the N-terminal section; belongs to the N-acetylglucosamine-1-phosphate uridyltransferase family. This sequence in the C-terminal section; belongs to the transferase hexapeptide repeat family. Homotrimer. The cofactor is Mg(2+).

The protein localises to the cytoplasm. The catalysed reaction is alpha-D-glucosamine 1-phosphate + acetyl-CoA = N-acetyl-alpha-D-glucosamine 1-phosphate + CoA + H(+). It catalyses the reaction N-acetyl-alpha-D-glucosamine 1-phosphate + UTP + H(+) = UDP-N-acetyl-alpha-D-glucosamine + diphosphate. It functions in the pathway nucleotide-sugar biosynthesis; UDP-N-acetyl-alpha-D-glucosamine biosynthesis; N-acetyl-alpha-D-glucosamine 1-phosphate from alpha-D-glucosamine 6-phosphate (route II): step 2/2. Its pathway is nucleotide-sugar biosynthesis; UDP-N-acetyl-alpha-D-glucosamine biosynthesis; UDP-N-acetyl-alpha-D-glucosamine from N-acetyl-alpha-D-glucosamine 1-phosphate: step 1/1. It participates in bacterial outer membrane biogenesis; LPS lipid A biosynthesis. Functionally, catalyzes the last two sequential reactions in the de novo biosynthetic pathway for UDP-N-acetylglucosamine (UDP-GlcNAc). The C-terminal domain catalyzes the transfer of acetyl group from acetyl coenzyme A to glucosamine-1-phosphate (GlcN-1-P) to produce N-acetylglucosamine-1-phosphate (GlcNAc-1-P), which is converted into UDP-GlcNAc by the transfer of uridine 5-monophosphate (from uridine 5-triphosphate), a reaction catalyzed by the N-terminal domain. This chain is Bifunctional protein GlmU, found in Gloeothece citriformis (strain PCC 7424) (Cyanothece sp. (strain PCC 7424)).